The sequence spans 227 residues: Large ribosomal subunit protein uL3 (227 aa).

The disordered stretch occupies residues R144–T166.

It belongs to the universal ribosomal protein uL3 family. In terms of assembly, part of the 50S ribosomal subunit. Forms a cluster with proteins L14 and L19.

Functionally, one of the primary rRNA binding proteins, it binds directly near the 3'-end of the 23S rRNA, where it nucleates assembly of the 50S subunit. In Trichodesmium erythraeum (strain IMS101), this protein is Large ribosomal subunit protein uL3.